A 333-amino-acid polypeptide reads, in one-letter code: Glycerol-3-phosphate dehydrogenase [NAD(P)+] (333 aa).

Positions 10, 11, 31, 32, and 105 each coordinate NADPH. Sn-glycerol 3-phosphate contacts are provided by Lys105, Gly136, and Ser138. Residue Ala140 coordinates NADPH. Sn-glycerol 3-phosphate is bound by residues Lys191, Asp244, Ser254, Arg255, and Asn256. Lys191 serves as the catalytic Proton acceptor. Arg255 is a binding site for NADPH. Residues Val279 and Glu281 each coordinate NADPH.

Belongs to the NAD-dependent glycerol-3-phosphate dehydrogenase family.

Its subcellular location is the cytoplasm. It catalyses the reaction sn-glycerol 3-phosphate + NAD(+) = dihydroxyacetone phosphate + NADH + H(+). It carries out the reaction sn-glycerol 3-phosphate + NADP(+) = dihydroxyacetone phosphate + NADPH + H(+). Its pathway is membrane lipid metabolism; glycerophospholipid metabolism. In terms of biological role, catalyzes the reduction of the glycolytic intermediate dihydroxyacetone phosphate (DHAP) to sn-glycerol 3-phosphate (G3P), the key precursor for phospholipid synthesis. The protein is Glycerol-3-phosphate dehydrogenase [NAD(P)+] of Chlorobium limicola (strain DSM 245 / NBRC 103803 / 6330).